Consider the following 186-residue polypeptide: Dehydrin Rab18 (186 aa).

A disordered region spans residues 1–186 (MASYQNRPGG…IKEKLPGGGR (186 aa)). Residues 30–85 (PMGGGGYGTGGGGGATGGQGYGTGGQGYGSGGQGYGTGGQGYGTGTGTEGFGTGGG) are compositionally biased toward gly residues. The segment covering 89-98 (HGQEQLHKES) has biased composition (basic and acidic residues). Residues 105-116 (MLHRSGSGSSSS) are compositionally biased toward low complexity. A compositionally biased stretch (basic and acidic residues) spans 133 to 144 (KIKEKLPGHHDQ). Positions 152–164 (GGMGSGYDAGGYG) are enriched in gly residues. Over residues 165–186 (GEHHEKKGMMDKIKEKLPGGGR) the composition is skewed to basic and acidic residues.

This sequence belongs to the plant dehydrin family.

The polypeptide is Dehydrin Rab18 (RAB18) (Arabidopsis thaliana (Mouse-ear cress)).